Reading from the N-terminus, the 861-residue chain is Methyltransferase/ribosomally synthesized type III borosin cyclic peptide precursor aboMAa (861 aa).

The methyltransferase domain stretch occupies residues 1–279 (MSSPAVETKV…AISTFYLPPK (279 aa)). Active-site residues include R100, Y104, and Y126. Residues Y126, H128, V131, A158, Q200, A241, S272, and T273 each contribute to the S-adenosyl-L-methionine site. The segment at 280 to 408 (ALSPLHEESA…GLVRSVMKTS (129 aa)) is clasp domain. The tract at residues 409-799 (PEDVAKQFVQ…PPDLEELPIP (391 aa)) is type III-specific C-terminal domain. 2 disordered regions span residues 575–596 (NGAFPSGGGGGSGGGGGSSSQG) and 772–801 (EAAEKDSAVDDEKFADEEPPDLEELPIPDA). Over residues 579–593 (PSGGGGGSGGGGGSS) the composition is skewed to gly residues. Over residues 772–783 (EAAEKDSAVDDE) the composition is skewed to basic and acidic residues. Over residues 784–797 (KFADEEPPDLEELP) the composition is skewed to acidic residues. 2 positions are modified to N-methylvaline: V805 and V807. 9 repeat units span residues 805 to 809 (VDVTD), 810 to 814 (VDVTD), 815 to 819 (VDVTD), 820 to 824 (VDVTD), 825 to 829 (VDVTD), 830 to 834 (VDVTD), 835 to 839 (VDVTD), 840 to 844 (VDVTD), and 845 to 849 (VDVTD). Positions 805–854 (VDVTDVDVTDVDVTDVDVTDVDVTDVDVTDVDVTDVDVTDVDVTDVDVVD) are 10 X 5 AA tandem repeats of VDVTD. N-methylthreonine is present on T808. V810 and V812 each carry N-methylvaline. T813 is modified (N-methylthreonine). N-methylvaline occurs at positions 815 and 817. T818 is modified (N-methylthreonine). N-methylvaline is present on residues V820 and V822. At T823 the chain carries N-methylthreonine. V825 and V827 each carry N-methylvaline. T828 bears the N-methylthreonine mark. An N-methylvaline mark is found at V830 and V832. T833 carries the post-translational modification N-methylthreonine. The stretch at 850 to 854 (VDVVD) is one 10; approximate repeat.

The protein in the N-terminal section; belongs to the precorrin methyltransferase family. AboMA automethylates at Val-805, Val-807, Thr-808, Val-810, Val-812, Thr-813, Val-815, Val-817, Thr-818, Val-820, Val-822, Thr-823, Val-825, Val-827 and Thr-828, Val-830, Val-832 and T-833 before being processed by a prolyloligopeptidase which likely forms a peptidyl ester upon removal of the follower propeptide, which then undergoes macrocyclization with the N-terminus of the modified core peptide. Peptide backbone alpha-N-methylations change the physicochemical properties of amide bonds to provide structural constraints and other favorable characteristics including biological membrane permeability to peptides.

It participates in secondary metabolite biosynthesis. In terms of biological role, fusion protein of the methyltransferase aboM and a type III borosin core peptide; part of the gene cluster that mediates the biosynthesis of a type III borosin, a highly methylated cyclic peptide with potent biological activities. Type III borosins derive from the C-terminus of the fusion protein, and it is the same protein that methylates its own C-terminus using S-adenosyl methionine (SAM). The C-terminus is subsequently cleaved off and macrocyclized by a prolyloligopeptidase to give the final product. The sequence is that of Methyltransferase/ribosomally synthesized type III borosin cyclic peptide precursor aboMAa from Anomoporia bombycina (Polyporus bombycinus).